The sequence spans 194 residues: dCTP deaminase (194 aa).

DCTP is bound by residues 110–115 (RSSLAR), D128, 136–138 (VLE), Y171, K178, and Q182. The Proton donor/acceptor role is filled by E138. The disordered stretch occupies residues 174–194 (RKSSKYKDQQEAVASRISQDK).

This sequence belongs to the dCTP deaminase family. As to quaternary structure, homotrimer.

The catalysed reaction is dCTP + H2O + H(+) = dUTP + NH4(+). The protein operates within pyrimidine metabolism; dUMP biosynthesis; dUMP from dCTP (dUTP route): step 1/2. In terms of biological role, catalyzes the deamination of dCTP to dUTP. The protein is dCTP deaminase of Shewanella frigidimarina (strain NCIMB 400).